Reading from the N-terminus, the 351-residue chain is Nicotinate-nucleotide--dimethylbenzimidazole phosphoribosyltransferase (351 aa).

Glu318 (proton acceptor) is an active-site residue.

Belongs to the CobT family.

The catalysed reaction is 5,6-dimethylbenzimidazole + nicotinate beta-D-ribonucleotide = alpha-ribazole 5'-phosphate + nicotinate + H(+). Its pathway is nucleoside biosynthesis; alpha-ribazole biosynthesis; alpha-ribazole from 5,6-dimethylbenzimidazole: step 1/2. In terms of biological role, catalyzes the synthesis of alpha-ribazole-5'-phosphate from nicotinate mononucleotide (NAMN) and 5,6-dimethylbenzimidazole (DMB). This is Nicotinate-nucleotide--dimethylbenzimidazole phosphoribosyltransferase from Shewanella frigidimarina (strain NCIMB 400).